The chain runs to 345 residues: Anthranilate phosphoribosyltransferase (345 aa).

5-phospho-alpha-D-ribose 1-diphosphate contacts are provided by residues Gly-84, 87–88, Thr-92, 94–97, 112–120, and Ser-124; these read GD, NIST, and KHGGRGVSS. Residue Gly-84 participates in anthranilate binding. Ser-96 contacts Mg(2+). Arg-170 serves as a coordination point for anthranilate. Residues Asp-229 and Glu-230 each coordinate Mg(2+).

The protein belongs to the anthranilate phosphoribosyltransferase family. As to quaternary structure, homodimer. The cofactor is Mg(2+).

It carries out the reaction N-(5-phospho-beta-D-ribosyl)anthranilate + diphosphate = 5-phospho-alpha-D-ribose 1-diphosphate + anthranilate. It participates in amino-acid biosynthesis; L-tryptophan biosynthesis; L-tryptophan from chorismate: step 2/5. In terms of biological role, catalyzes the transfer of the phosphoribosyl group of 5-phosphorylribose-1-pyrophosphate (PRPP) to anthranilate to yield N-(5'-phosphoribosyl)-anthranilate (PRA). The chain is Anthranilate phosphoribosyltransferase from Paracidovorax citrulli (strain AAC00-1) (Acidovorax citrulli).